A 449-amino-acid polypeptide reads, in one-letter code: 3-phosphoshikimate 1-carboxyvinyltransferase (449 aa).

Residues M1–I30 form a disordered region. Residues K28, S29, and R33 each contribute to the 3-phosphoshikimate site. K28 serves as a coordination point for phosphoenolpyruvate. Phosphoenolpyruvate contacts are provided by G101 and R129. Positions 175, 177, 330, and 357 each coordinate 3-phosphoshikimate. Q177 contributes to the phosphoenolpyruvate binding site. The active-site Proton acceptor is the D330. The phosphoenolpyruvate site is built by R361 and R405.

Belongs to the EPSP synthase family. As to quaternary structure, monomer.

It localises to the cytoplasm. It carries out the reaction 3-phosphoshikimate + phosphoenolpyruvate = 5-O-(1-carboxyvinyl)-3-phosphoshikimate + phosphate. It functions in the pathway metabolic intermediate biosynthesis; chorismate biosynthesis; chorismate from D-erythrose 4-phosphate and phosphoenolpyruvate: step 6/7. In terms of biological role, catalyzes the transfer of the enolpyruvyl moiety of phosphoenolpyruvate (PEP) to the 5-hydroxyl of shikimate-3-phosphate (S3P) to produce enolpyruvyl shikimate-3-phosphate and inorganic phosphate. This chain is 3-phosphoshikimate 1-carboxyvinyltransferase, found in Methylobacterium radiotolerans (strain ATCC 27329 / DSM 1819 / JCM 2831 / NBRC 15690 / NCIMB 10815 / 0-1).